Reading from the N-terminus, the 340-residue chain is Phenylalanine--tRNA ligase alpha subunit (340 aa).

Residue Glu-254 coordinates Mg(2+).

This sequence belongs to the class-II aminoacyl-tRNA synthetase family. Phe-tRNA synthetase alpha subunit type 1 subfamily. As to quaternary structure, tetramer of two alpha and two beta subunits. Requires Mg(2+) as cofactor.

The protein localises to the cytoplasm. The enzyme catalyses tRNA(Phe) + L-phenylalanine + ATP = L-phenylalanyl-tRNA(Phe) + AMP + diphosphate + H(+). The polypeptide is Phenylalanine--tRNA ligase alpha subunit (Caldicellulosiruptor saccharolyticus (strain ATCC 43494 / DSM 8903 / Tp8T 6331)).